A 155-amino-acid polypeptide reads, in one-letter code: MWEVAWWRPGTWGGLAMRVGQVAFAGASIGVMASGAGFANYTAFCYLIASMGLQSLWSLGLACLDVYALTVKRDLNNALLVSLFVIGDWVTALLSFAASCSAGGVMVLFKRDVLFCRRYPQLPCGRFELAVALAFLSWALSATSAIIMFCLLAAF.

Topologically, residues 1-18 are cytoplasmic; that stretch reads MWEVAWWRPGTWGGLAMR. The chain crosses the membrane as a helical span at residues 19 to 39; the sequence is VGQVAFAGASIGVMASGAGFA. N-linked (GlcNAc...) asparagine glycosylation is present at Asn40. Residues 40 to 43 are Extracellular-facing; the sequence is NYTA. The chain crosses the membrane as a helical span at residues 44–64; sequence FCYLIASMGLQSLWSLGLACL. The Cytoplasmic segment spans residues 65–77; the sequence is DVYALTVKRDLNN. The chain crosses the membrane as a helical span at residues 78 to 98; the sequence is ALLVSLFVIGDWVTALLSFAA. Over 99–128 the chain is Extracellular; the sequence is SCSAGGVMVLFKRDVLFCRRYPQLPCGRFE. A helical membrane pass occupies residues 129 to 149; that stretch reads LAVALAFLSWALSATSAIIMF. At 150 to 155 the chain is on the cytoplasmic side; that stretch reads CLLAAF.

This sequence belongs to the Casparian strip membrane proteins (CASP) family. As to quaternary structure, homodimer and heterodimers.

The protein localises to the cell membrane. This chain is CASP-like protein 5B2, found in Oryza sativa subsp. indica (Rice).